The sequence spans 169 residues: Nascent polypeptide-associated complex subunit alpha (169 aa).

The 65-residue stretch at 14–78 (NKNEKKAREM…AKIDNFSQKL (65 aa)) folds into the NAC-A/B domain. Positions 85–128 (IQSVSKSPEEIQKDMQLAADQAGDESAKPAAAAEEDDEAPVDAG) are disordered. In terms of domain architecture, UBA spans 130 to 169 (LSAEDIELVASQANVSKNKAIKALKEHNGDIVNAIMALSK).

It belongs to the NAC-alpha family. Part of the nascent polypeptide-associated complex (NAC), consisting of EGD2 and EGD1. NAC associates with ribosomes via EGD1.

It localises to the cytoplasm. The protein localises to the nucleus. Functionally, component of the nascent polypeptide-associated complex (NAC), a dynamic component of the ribosomal exit tunnel, protecting the emerging polypeptides from interaction with other cytoplasmic proteins to ensure appropriate nascent protein targeting. The NAC complex also promotes mitochondrial protein import by enhancing productive ribosome interactions with the outer mitochondrial membrane and blocks the inappropriate interaction of ribosomes translating non-secretory nascent polypeptides with translocation sites in the membrane of the endoplasmic reticulum. EGD2 may also be involved in transcription regulation. This is Nascent polypeptide-associated complex subunit alpha (EGD2) from Vanderwaltozyma polyspora (strain ATCC 22028 / DSM 70294 / BCRC 21397 / CBS 2163 / NBRC 10782 / NRRL Y-8283 / UCD 57-17) (Kluyveromyces polysporus).